Consider the following 645-residue polypeptide: Threonine--tRNA ligase (645 aa).

A TGS domain is found at 1–63 (MEQINIQFPD…ETDGSIGIVT (63 aa)). The interval 242 to 540 (DHRKIGKELE…LTEETKGAFP (299 aa)) is catalytic. C336, H387, and H517 together coordinate Zn(2+).

The protein belongs to the class-II aminoacyl-tRNA synthetase family. As to quaternary structure, homodimer. Zn(2+) is required as a cofactor.

It is found in the cytoplasm. It catalyses the reaction tRNA(Thr) + L-threonine + ATP = L-threonyl-tRNA(Thr) + AMP + diphosphate + H(+). Functionally, catalyzes the attachment of threonine to tRNA(Thr) in a two-step reaction: L-threonine is first activated by ATP to form Thr-AMP and then transferred to the acceptor end of tRNA(Thr). Also edits incorrectly charged L-seryl-tRNA(Thr). This chain is Threonine--tRNA ligase, found in Staphylococcus aureus (strain Mu3 / ATCC 700698).